The chain runs to 100 residues: U-myrmeciitoxin(01)-Mg7c (100 aa).

Positions 1–17 are cleaved as a signal peptide; that stretch reads MKLSYLSLALAIILVLA. The propeptide occupies 18–50; that stretch reads IVYSPHMEVKALADAEPDAIGFADAFGEADAEP. O-linked (GalNAc...) serine glycosylation occurs at serine 85. Residues threonine 94 and threonine 95 are each glycosylated (O-linked (GalNAc...) threonine).

The protein belongs to the formicidae venom precursor-01 superfamily. Glycosylation is critical to maintaining the aqueous solubility of this protein, but does not directly contribute to its activity. Expressed by the venom gland.

The protein localises to the secreted. Its subcellular location is the target cell membrane. In terms of biological role, neurotoxin that triggers pain behavior and inflammation in mammals, and is paralytic and lethal to insects. Causes a time-dependent increase in cell leak current. May act by targeting membranes. In Myrmecia gulosa (Red bulldog ant), this protein is U-myrmeciitoxin(01)-Mg7c.